The chain runs to 208 residues: MGSGPRGAVSLLLLMLAPPSCPAADCPAPCSCAGTLVDCGRRGLTWASLPTSFPVHTTELVLTGNNLTALPSGLLDALPAVRTAHLGANPWRCDCRLVPLRAWLAGRPERAPYRDLRCVAPPAVRGRLLPYLAEDDVRAACAPGPLCWGALAAELALLGLGLLHALLLVLLLCRLRRLRARARARARAALRLSLTDPLVAEQDGTDES.

An N-terminal signal peptide occupies residues Met1 to Cys26. Intrachain disulfides connect Cys26–Cys32 and Cys30–Cys39. The region spanning Pro27–Val55 is the LRRNT domain. Over Pro27–Cys147 the chain is Extracellular. One copy of the LRR repeat lies at Leu60–Thr83. Residue Asn66 is glycosylated (N-linked (GlcNAc...) asparagine). The region spanning Asn89–Pro143 is the LRRCT domain. Cystine bridges form between Cys93–Cys118 and Cys95–Cys141. The chain crosses the membrane as a helical span at residues Trp148–Leu172. Topologically, residues Cys173–Ser208 are cytoplasmic. Ser193 bears the Phosphoserine; by PKA mark. Thr195 bears the Phosphothreonine mark.

In terms of assembly, two GP-Ib beta are disulfide-linked to one GP-Ib alpha. GP-IX is complexed with the GP-Ib heterodimer via a non covalent linkage. Interacts with TRAF4.

It localises to the membrane. Its function is as follows. Gp-Ib, a surface membrane protein of platelets, participates in the formation of platelet plugs by binding to von Willebrand factor, which is already bound to the subendothelium. The polypeptide is Platelet glycoprotein Ib beta chain (GP1BB) (Papio cynocephalus (Yellow baboon)).